The primary structure comprises 263 residues: Endonuclease 8 (263 aa).

The active-site Schiff-base intermediate with DNA is Pro2. Glu3 functions as the Proton donor in the catalytic mechanism. Lys53 (proton donor; for beta-elimination activity) is an active-site residue. Residues Gln70, Arg125, and Asn169 each contribute to the DNA site. Residues 229–263 (KVFHRDGEPCERCGGIIEKTTLSSRPFYWCPGCQH) form an FPG-type zinc finger. Arg253 serves as the catalytic Proton donor; for delta-elimination activity.

Belongs to the FPG family. Zn(2+) serves as cofactor.

The enzyme catalyses 2'-deoxyribonucleotide-(2'-deoxyribose 5'-phosphate)-2'-deoxyribonucleotide-DNA = a 3'-end 2'-deoxyribonucleotide-(2,3-dehydro-2,3-deoxyribose 5'-phosphate)-DNA + a 5'-end 5'-phospho-2'-deoxyribonucleoside-DNA + H(+). In terms of biological role, involved in base excision repair of DNA damaged by oxidation or by mutagenic agents. Acts as a DNA glycosylase that recognizes and removes damaged bases. Has a preference for oxidized pyrimidines, such as thymine glycol, 5,6-dihydrouracil and 5,6-dihydrothymine. Has AP (apurinic/apyrimidinic) lyase activity and introduces nicks in the DNA strand. Cleaves the DNA backbone by beta-delta elimination to generate a single-strand break at the site of the removed base with both 3'- and 5'-phosphates. This Escherichia coli O6:K15:H31 (strain 536 / UPEC) protein is Endonuclease 8.